The primary structure comprises 394 residues: Probable tRNA sulfurtransferase (394 aa).

A THUMP domain is found at 61–168; it reads DETVATLSRI…PMINIYSEEI (108 aa). ATP-binding positions include 185 to 186, 210 to 211, Arg267, Gly289, and Gln298; these read LL and YF.

The protein belongs to the ThiI family.

It is found in the cytoplasm. It catalyses the reaction [ThiI sulfur-carrier protein]-S-sulfanyl-L-cysteine + a uridine in tRNA + 2 reduced [2Fe-2S]-[ferredoxin] + ATP + H(+) = [ThiI sulfur-carrier protein]-L-cysteine + a 4-thiouridine in tRNA + 2 oxidized [2Fe-2S]-[ferredoxin] + AMP + diphosphate. The catalysed reaction is [ThiS sulfur-carrier protein]-C-terminal Gly-Gly-AMP + S-sulfanyl-L-cysteinyl-[cysteine desulfurase] + AH2 = [ThiS sulfur-carrier protein]-C-terminal-Gly-aminoethanethioate + L-cysteinyl-[cysteine desulfurase] + A + AMP + 2 H(+). Its pathway is cofactor biosynthesis; thiamine diphosphate biosynthesis. In terms of biological role, catalyzes the ATP-dependent transfer of a sulfur to tRNA to produce 4-thiouridine in position 8 of tRNAs, which functions as a near-UV photosensor. Also catalyzes the transfer of sulfur to the sulfur carrier protein ThiS, forming ThiS-thiocarboxylate. This is a step in the synthesis of thiazole, in the thiamine biosynthesis pathway. The sulfur is donated as persulfide by IscS. This is Probable tRNA sulfurtransferase from Agathobacter rectalis (strain ATCC 33656 / DSM 3377 / JCM 17463 / KCTC 5835 / VPI 0990) (Eubacterium rectale).